Reading from the N-terminus, the 228-residue chain is 2,3-bisphosphoglycerate-dependent phosphoglycerate mutase (228 aa).

Substrate-binding positions include 8 to 15 (RHGQSAWN), 21 to 22 (TG), Arg60, 87 to 90 (ERHY), Lys98, 114 to 115 (RR), and 180 to 181 (GN). His9 functions as the Tele-phosphohistidine intermediate in the catalytic mechanism. Catalysis depends on Glu87, which acts as the Proton donor/acceptor.

The protein belongs to the phosphoglycerate mutase family. BPG-dependent PGAM subfamily. As to quaternary structure, homodimer.

The catalysed reaction is (2R)-2-phosphoglycerate = (2R)-3-phosphoglycerate. The protein operates within carbohydrate degradation; glycolysis; pyruvate from D-glyceraldehyde 3-phosphate: step 3/5. Catalyzes the interconversion of 2-phosphoglycerate and 3-phosphoglycerate. In Rhizorhabdus wittichii (strain DSM 6014 / CCUG 31198 / JCM 15750 / NBRC 105917 / EY 4224 / RW1) (Sphingomonas wittichii), this protein is 2,3-bisphosphoglycerate-dependent phosphoglycerate mutase.